Reading from the N-terminus, the 234-residue chain is MEIYEGKAKKMIPLDEDKFIMEFKDDATAFDGVKKAKFVGKGWLNAQISAKLFKLLEDHGIKTHFIGVAGGNRLIVERLEMYPIEVVVRNVVAGSLKKRLPLPEGYELPEPIVELYYKSDELHDPMINYYHARILGISEEEIKEMERIALKVNEILKKFFREKGIILVDFKLEFGKNKKGEIVLADEISPDTCRFWDVETKKSLDKDVFRFDKGDLIEAYKELYKRLIGEEPQI.

The protein belongs to the SAICAR synthetase family.

It carries out the reaction 5-amino-1-(5-phospho-D-ribosyl)imidazole-4-carboxylate + L-aspartate + ATP = (2S)-2-[5-amino-1-(5-phospho-beta-D-ribosyl)imidazole-4-carboxamido]succinate + ADP + phosphate + 2 H(+). It participates in purine metabolism; IMP biosynthesis via de novo pathway; 5-amino-1-(5-phospho-D-ribosyl)imidazole-4-carboxamide from 5-amino-1-(5-phospho-D-ribosyl)imidazole-4-carboxylate: step 1/2. In Pyrococcus furiosus (strain ATCC 43587 / DSM 3638 / JCM 8422 / Vc1), this protein is Phosphoribosylaminoimidazole-succinocarboxamide synthase.